Consider the following 509-residue polypeptide: Histidine--tRNA ligase, cytoplasmic (509 aa).

A2 is subject to N-acetylalanine. In terms of domain architecture, WHEP-TRS spans 3–59 (DRAALEELVRLQGAHVRGLKEQKASAEQIEEEVTKLLKLKAQLGQDEGKQKFVLKTP). S66 is subject to Phosphoserine. L-histidine-binding positions include 130–132 (DLT), R157, Q173, D177, R326, and 330–331 (YY). Position 356 is a phosphoserine (S356).

It belongs to the class-II aminoacyl-tRNA synthetase family. Homodimer.

The protein resides in the cytoplasm. It carries out the reaction tRNA(His) + L-histidine + ATP = L-histidyl-tRNA(His) + AMP + diphosphate + H(+). Catalyzes the ATP-dependent ligation of histidine to the 3'-end of its cognate tRNA, via the formation of an aminoacyl-adenylate intermediate (His-AMP). Plays a role in axon guidance. The chain is Histidine--tRNA ligase, cytoplasmic (Hars1) from Mus musculus (Mouse).